The following is a 249-amino-acid chain: tRNA (guanine-N(1)-)-methyltransferase (249 aa).

S-adenosyl-L-methionine-binding positions include G113 and 133–138; that span reads LGDFVL.

It belongs to the RNA methyltransferase TrmD family. As to quaternary structure, homodimer.

It localises to the cytoplasm. It carries out the reaction guanosine(37) in tRNA + S-adenosyl-L-methionine = N(1)-methylguanosine(37) in tRNA + S-adenosyl-L-homocysteine + H(+). Functionally, specifically methylates guanosine-37 in various tRNAs. The sequence is that of tRNA (guanine-N(1)-)-methyltransferase from Leptothrix cholodnii (strain ATCC 51168 / LMG 8142 / SP-6) (Leptothrix discophora (strain SP-6)).